Here is a 190-residue protein sequence, read N- to C-terminus: UPF0301 protein Reut_A0705 (190 aa).

This sequence belongs to the UPF0301 (AlgH) family.

This is UPF0301 protein Reut_A0705 from Cupriavidus pinatubonensis (strain JMP 134 / LMG 1197) (Cupriavidus necator (strain JMP 134)).